We begin with the raw amino-acid sequence, 244 residues long: Prolactin-7D1 (244 aa).

An N-terminal signal peptide occupies residues 1 to 30 (MLPSLIQPCSSGTLLMLLMSNLFLWEKVSS). 2 disulfide bridges follow: Cys99/Cys215 and Cys232/Cys240.

The protein belongs to the somatotropin/prolactin family.

The protein resides in the secreted. This is Prolactin-7D1 (Prl7d1) from Mus musculus (Mouse).